An 86-amino-acid chain; its full sequence is Large ribosomal subunit protein uL23 (86 aa).

This sequence belongs to the universal ribosomal protein uL23 family. Part of the 50S ribosomal subunit. Contacts protein L29.

In terms of biological role, binds to 23S rRNA. One of the proteins that surrounds the polypeptide exit tunnel on the outside of the ribosome. This chain is Large ribosomal subunit protein uL23, found in Methanocaldococcus jannaschii (strain ATCC 43067 / DSM 2661 / JAL-1 / JCM 10045 / NBRC 100440) (Methanococcus jannaschii).